We begin with the raw amino-acid sequence, 332 residues long: Ribosomal RNA small subunit methyltransferase H (332 aa).

S-adenosyl-L-methionine is bound by residues 36–38 (GGY), Asp-54, Phe-81, Asp-102, and Gln-109. Positions 297–318 (ARSAKLRGAERTEAPAHAAGDL) are disordered.

The protein belongs to the methyltransferase superfamily. RsmH family.

Its subcellular location is the cytoplasm. It carries out the reaction cytidine(1402) in 16S rRNA + S-adenosyl-L-methionine = N(4)-methylcytidine(1402) in 16S rRNA + S-adenosyl-L-homocysteine + H(+). Specifically methylates the N4 position of cytidine in position 1402 (C1402) of 16S rRNA. This Rhodopseudomonas palustris (strain TIE-1) protein is Ribosomal RNA small subunit methyltransferase H.